The primary structure comprises 155 residues: NADPH-dependent 7-cyano-7-deazaguanine reductase (155 aa).

The active-site Thioimide intermediate is Cys53. The active-site Proton donor is Asp60. Residues 75 to 77 (VES) and 94 to 95 (HE) contribute to the substrate site.

The protein belongs to the GTP cyclohydrolase I family. QueF type 1 subfamily.

The protein localises to the cytoplasm. It catalyses the reaction 7-aminomethyl-7-carbaguanine + 2 NADP(+) = 7-cyano-7-deazaguanine + 2 NADPH + 3 H(+). The protein operates within tRNA modification; tRNA-queuosine biosynthesis. In terms of biological role, catalyzes the NADPH-dependent reduction of 7-cyano-7-deazaguanine (preQ0) to 7-aminomethyl-7-deazaguanine (preQ1). The protein is NADPH-dependent 7-cyano-7-deazaguanine reductase of Ruegeria pomeroyi (strain ATCC 700808 / DSM 15171 / DSS-3) (Silicibacter pomeroyi).